A 261-amino-acid polypeptide reads, in one-letter code: Carnitinyl-CoA dehydratase (261 aa).

Glutamate 111 acts as the Nucleophile in catalysis. The Proton acceptor role is filled by glutamate 131.

The protein belongs to the enoyl-CoA hydratase/isomerase family.

It catalyses the reaction (R)-carnitinyl-CoA = crotonobetainyl-CoA + H2O. The protein operates within amine and polyamine metabolism; carnitine metabolism. Catalyzes the reversible dehydration of L-carnitinyl-CoA to crotonobetainyl-CoA. This Citrobacter koseri (strain ATCC BAA-895 / CDC 4225-83 / SGSC4696) protein is Carnitinyl-CoA dehydratase.